Consider the following 350-residue polypeptide: Biotin synthase (350 aa).

In terms of domain architecture, Radical SAM core spans 41 to 265; it reads NEVQISRLLS…VMPLSRVRLS (225 aa). Positions 56, 60, and 63 each coordinate [4Fe-4S] cluster. [2Fe-2S] cluster is bound by residues Cys100, Cys131, Cys191, and Arg263.

Belongs to the radical SAM superfamily. Biotin synthase family. In terms of assembly, homodimer. Requires [4Fe-4S] cluster as cofactor. The cofactor is [2Fe-2S] cluster.

The enzyme catalyses (4R,5S)-dethiobiotin + (sulfur carrier)-SH + 2 reduced [2Fe-2S]-[ferredoxin] + 2 S-adenosyl-L-methionine = (sulfur carrier)-H + biotin + 2 5'-deoxyadenosine + 2 L-methionine + 2 oxidized [2Fe-2S]-[ferredoxin]. The protein operates within cofactor biosynthesis; biotin biosynthesis; biotin from 7,8-diaminononanoate: step 2/2. In terms of biological role, catalyzes the conversion of dethiobiotin (DTB) to biotin by the insertion of a sulfur atom into dethiobiotin via a radical-based mechanism. This Shewanella loihica (strain ATCC BAA-1088 / PV-4) protein is Biotin synthase.